The chain runs to 103 residues: Thioredoxin-1 (103 aa).

Positions 2–103 constitute a Thioredoxin domain; the sequence is VKQVSDSSEF…KLEASIKANL (102 aa). Catalysis depends on nucleophile residues C30 and C33. C30 and C33 form a disulfide bridge.

Belongs to the thioredoxin family.

In terms of biological role, participates in various redox reactions through the reversible oxidation of its active center dithiol to a disulfide and catalyzes dithiol-disulfide exchange reactions. The polypeptide is Thioredoxin-1 (trx1) (Schizosaccharomyces pombe (strain 972 / ATCC 24843) (Fission yeast)).